The chain runs to 556 residues: MSVSAFNRRWAAVILEALTRHGVRHVCIAPGSRSTPLTLAAAENPAFIHHTHFDERGLGHLALGLAKVSQQPVAVIVTSGTAVANLYPALIEAGLTGEKLILLTADRPPELIDCGANQAIRQAGMFASHPSQTLSLPRPTQDIPARWLVSTIDNALAMLHAGALHINCPFAEPLYGDMNDTGLVWQQRLGDWWQDEKPWLREARRLESDKQRDWFFWRQKRGVVVAGRMSAEEGKKVAQWAQTLGWPLIGDVLSQTGQPLPCADLWLGNAKAVTELQQAQIVVQLGSSLTGKRLLQWQATCEPEEYWVIDNIEGRLDPAHHRGRRLVAKIADWLELHPAEKRKPWCVEIPRLVELAWQRVVAQRDTFGEAQLAHRIRDYLPEQGQLFVGNSLVVRLIDALSQLPAGYPVYSNRGASGIDGLLSTAAGVQRASAKSTLAIVGDLSALYDLNALALLRQVSAPFVLIVVNNNGGQIFSLLPTPQSKRERFYLMPQNVHFDHAAAMFNLRYHRPENWEELESALAGAWRTPAATVIELVVNDTDGAQTLQQLLAQVSHL.

This sequence belongs to the TPP enzyme family. MenD subfamily. Homodimer. Mg(2+) serves as cofactor. Mn(2+) is required as a cofactor. Requires thiamine diphosphate as cofactor.

The catalysed reaction is isochorismate + 2-oxoglutarate + H(+) = 5-enolpyruvoyl-6-hydroxy-2-succinyl-cyclohex-3-ene-1-carboxylate + CO2. Its pathway is quinol/quinone metabolism; 1,4-dihydroxy-2-naphthoate biosynthesis; 1,4-dihydroxy-2-naphthoate from chorismate: step 2/7. It participates in quinol/quinone metabolism; menaquinone biosynthesis. Functionally, catalyzes the thiamine diphosphate-dependent decarboxylation of 2-oxoglutarate and the subsequent addition of the resulting succinic semialdehyde-thiamine pyrophosphate anion to isochorismate to yield 2-succinyl-5-enolpyruvyl-6-hydroxy-3-cyclohexene-1-carboxylate (SEPHCHC). The protein is 2-succinyl-5-enolpyruvyl-6-hydroxy-3-cyclohexene-1-carboxylate synthase of Salmonella paratyphi C (strain RKS4594).